Here is a 731-residue protein sequence, read N- to C-terminus: Actin filament-associated protein 1 (731 aa).

N-acetylmethionine is present on M1. The disordered stretch occupies residues 46-90 (VKDHAQKAETNNLPAPPQMPLPEIPQPWLPPDSGPPPLPTSSLPE). Over residues 59–84 (PAPPQMPLPEIPQPWLPPDSGPPPLP) the composition is skewed to pro residues. Positions 70-73 (PQPW) match the SH3-binding motif. Positions 93 to 96 (YEEA) match the SH2-binding 1 motif. Positions 118 to 138 (GSSYESYDEEEEDGKGKKTQH) are disordered. The PH 1 domain occupies 152–248 (DAKICAFLLR…WLKVIKEAYS (97 aa)). Residues 252–318 (GPVDPECSPP…SKSEAKGTVS (67 aa)) are disordered. The span at 271–284 (AELEKKLSSERPSS) shows a compositional bias: basic and acidic residues. S283 and S284 each carry phosphoserine. Residues 348 to 442 (DVPTCGYLNV…WIGILLAETG (95 aa)) enclose the PH 2 domain. The short motif at 452 to 457 (YDYIDV) is the SH2-binding 2 element. Residues 511–550 (SLKNKKPPASSNGLPVKGRAPSSQQKKVESAGGVKRTASN) form a disordered region. S549 carries the post-translational modification Phosphoserine. Positions 558 to 649 (KNRVEADAKR…VKESLKKALA (92 aa)) form a coiled coil. The interval 595–638 (DLRAAIEVNAGRKTQVALEDKLKRLEEECKQREAERVSLELELT) is interaction with F-actin. Residues 657–731 (AIEPKSGTSS…AREWELKNGT (75 aa)) are disordered. Residues S665, S666, and S669 each carry the phosphoserine modification. Phosphothreonine is present on T676. Residues 678–687 (ENSPISSCDT) show a composition bias toward polar residues. Residues S680 and S688 each carry the phosphoserine modification. Over residues 721 to 731 (KAREWELKNGT) the composition is skewed to basic and acidic residues.

Monomer and homomultimer. Interacts via its C-terminus with F-actin; probably involving AFAP1 multimers. Interacts with activated SRC SH3-SH2 domains. Interacts via its PH 1 domain with PRKCA, PRKCB and PRKCI. Phosphorylated on tyrosine residues. As to expression, widely expressed with highest levels in brain.

The protein localises to the cytoplasm. It is found in the cytoskeleton. It localises to the stress fiber. In terms of biological role, can cross-link actin filaments into both network and bundle structures. May modulate changes in actin filament integrity and induce lamellipodia formation. May function as an adapter molecule that links other proteins, such as SRC and PKC to the actin cytoskeleton. This Rattus norvegicus (Rat) protein is Actin filament-associated protein 1 (Afap1).